Consider the following 851-residue polypeptide: Protein BCK2 (851 aa).

Over residues 1–10 the composition is skewed to basic residues; it reads MPKNSHHHRS. Disordered stretches follow at residues 1–91, 233–271, 315–355, 466–504, and 698–722; these read MPKN…RKKS, EVVPKSTHDPSLAKPPSRFTESETNSTPNLSSIPLMNTK, SLSL…LPEE, FLDGQPQHKSGSVKGGHRKKQESISDAQRIQHSNSYITT, and HASRSESNNNTGNRVSYSGSTPNNV. A compositionally biased stretch (low complexity) spans 11–23; it reads SSVNSTKSRSTES. The segment covering 37-66 has biased composition (polar residues); the sequence is ASGSTQASPDRNSSTGSCSTPVLPTMNVMS. Basic and acidic residues predominate over residues 71–81; it reads VLLEDPRDNHT. Composition is skewed to polar residues over residues 254–271, 334–349, 489–504, and 702–722; these read SETNSTPNLSSIPLMNTK, SPRTSRSFNCGDSQSK, ISDAQRIQHSNSYITT, and SESNNNTGNRVSYSGSTPNNV. Ser-334 is modified (phosphoserine). Residues Ser-757 and Ser-761 each carry the phosphoserine modification.

Functionally, dosage dependent suppressor of PKC1 deletion and MPK1 deletion. Involved in cell lysis. This is Protein BCK2 (BCK2) from Saccharomyces cerevisiae (strain ATCC 204508 / S288c) (Baker's yeast).